The primary structure comprises 451 residues: Tubulin alpha-1B chain (451 aa).

The MREC motif signature appears at 1–4; sequence MREC. G10, Q11, A12, and Q15 together coordinate GTP. K40 is subject to N6,N6,N6-trimethyllysine; alternate. K40 carries the N6-acetyllysine; alternate modification. At S48 the chain carries Phosphoserine. Residues E71, A99, S140, G143, G144, T145, G146, T179, E183, N206, Y224, and N228 each contribute to the GTP site. Position 71 (E71) interacts with Mg(2+). S232 carries the post-translational modification Phosphoserine. Position 252 (L252) interacts with GTP. E254 is an active-site residue. 3'-nitrotyrosine is present on Y282. Residue K326 forms a Glycyl lysine isopeptide (Lys-Gly) (interchain with G-Cter in ubiquitin) linkage. At R339 the chain carries Omega-N-methylarginine. K370 participates in a covalent cross-link: Glycyl lysine isopeptide (Lys-Gly) (interchain with G-Cter in ubiquitin). The disordered stretch occupies residues 432–451; that stretch reads YEEVGVDSVEGEGEEEGEEY. Phosphoserine is present on S439. A 5-glutamyl polyglutamate mark is found at E443 and E445. Residue Y451 is modified to 3'-nitrotyrosine.

Belongs to the tubulin family. Heterodimer of alpha- and beta-tubulin. A typical microtubule is a hollow water-filled tube with an outer diameter of 25 nm and an inner diameter of 15 nM. Alpha-beta heterodimers associate head-to-tail to form protofilaments running lengthwise along the microtubule wall with the beta-tubulin subunit facing the microtubule plus end conferring a structural polarity. Microtubules usually have 13 protofilaments but different protofilament numbers can be found in some organisms and specialized cells. Interacts with gamma-tubulin; the interaction allows microtubules to nucleate from the gamma-tubulin ring complex (gTuRC). Nascent microtubule interacts (via alpha-tubulin MREC motif) with TTC5/STRAP; this interaction may result in tubulin mRNA-targeted degradation. Component of sperm flagellar doublet microtubules. It depends on Mg(2+) as a cofactor. In terms of processing, some glutamate residues at the C-terminus are polyglutamylated, resulting in polyglutamate chains on the gamma-carboxyl group. Polyglutamylation plays a key role in microtubule severing by spastin (SPAST). SPAST preferentially recognizes and acts on microtubules decorated with short polyglutamate tails: severing activity by SPAST increases as the number of glutamates per tubulin rises from one to eight, but decreases beyond this glutamylation threshold. Glutamylation is also involved in cilia motility. Post-translationally, some glutamate residues at the C-terminus are monoglycylated but not polyglycylated due to the absence of functional TTLL10 in human. Monoglycylation is mainly limited to tubulin incorporated into cilia and flagella axonemes, which is required for their stability and maintenance. Flagella glycylation controls sperm motility. Both polyglutamylation and monoglycylation can coexist on the same protein on adjacent residues, and lowering glycylation levels increases polyglutamylation, and reciprocally. Acetylation of alpha chains at Lys-40 is located inside the microtubule lumen. This modification has been correlated with increased microtubule stability, intracellular transport and ciliary assembly. In terms of processing, methylation of alpha chains at Lys-40 is found in mitotic microtubules and is required for normal mitosis and cytokinesis contributing to genomic stability. Post-translationally, nitration of Tyr-451 is irreversible and interferes with normal dynein intracellular distribution. Undergoes a tyrosination/detyrosination cycle, the cyclic removal and re-addition of a C-terminal tyrosine residue by the enzymes tubulin tyrosine carboxypeptidase (MATCAP1/KIAA0895L, VASH1 or VASH2) and tubulin tyrosine ligase (TTL), respectively. In terms of processing, tyrosination promotes microtubule interaction with CAP-Gly domain-containing proteins such as CLIP1, CLIP2 and DCTN1. Tyrosination regulates the initiation of dynein-dynactin motility via interaction with DCTN1, which brings the dynein-dynactin complex into contact with microtubules. In neurons, tyrosinated tubulins mediate the initiation of retrograde vesicle transport. Post-translationally, detyrosination is involved in metaphase plate congression by guiding chromosomes during mitosis: detyrosination promotes interaction with CENPE, promoting pole-proximal transport of chromosomes toward the equator. Detyrosination increases microtubules-dependent mechanotransduction in dystrophic cardiac and skeletal muscle. In cardiomyocytes, detyrosinated microtubules are required to resist to contractile compression during contraction: detyrosination promotes association with desmin (DES) at force-generating sarcomeres, leading to buckled microtubules and mechanical resistance to contraction.

The protein resides in the cytoplasm. It localises to the cytoskeleton. The catalysed reaction is GTP + H2O = GDP + phosphate + H(+). Functionally, tubulin is the major constituent of microtubules, protein filaments consisting of alpha- and beta-tubulin heterodimers. Microtubules grow by the addition of GTP-tubulin dimers to the microtubule end, where a stabilizing cap forms. Below the cap, tubulin dimers are in GDP-bound state, owing to GTPase activity of alpha-tubulin. This Homo sapiens (Human) protein is Tubulin alpha-1B chain (TUBA1B).